Consider the following 184-residue polypeptide: MARSLVHDTVFYCLSVYQVKISPTPQLGAASSAEGHVGQGAPGLMGNMNPEGGVNHENGMNRDGGMIPEGGGGNQEPRQQPQPPPEEPAQAAMEGPQPENMQPRTRRTKFTLLQVEELESVFRHTQYPDVPTRRELAENLGVTEDKVRVWFKNKRARCRRHQRELMLANELRADPDDCVYIVVD.

The segment at glutamine 26–arginine 104 is disordered. The span at proline 88 to glutamate 99 shows a compositional bias: low complexity. The segment at residues proline 103–glutamine 162 is a DNA-binding region (homeobox). The short motif at arginine 155–glutamate 164 is the Nuclear localization signal element.

The protein belongs to the paired-like homeobox family. PEPP subfamily. As to quaternary structure, does not interact with itself. As to expression, ovary, testis and epididymis. Also detected in the prostate and the mammary gland. Expressed in many tumor cell lines derived from acute lymphocytic leukemia, prostate, endometrial adenocarcinoma, melanoma, bladder carcinoma, colon carcinoma, erythroleukemia and breast carcinoma. Not expressed in placenta. In testis, mainly expressed in germ cells, but also detected in somatic cells such as Sertoli cells, Leydig cells and peritubular cells.

The protein localises to the nucleus. Its function is as follows. Transcription factor maybe involved in reproductive processes. Modulates expression of target genes encoding proteins involved in processes relevant to spermatogenesis. In Homo sapiens (Human), this protein is Rhox homeobox family member 1.